Consider the following 359-residue polypeptide: UPF0496 protein At3g57100 (359 aa).

Residues His179–Ala208 are a coiled coil. Residues Leu214 to Ile234 form a helical membrane-spanning segment.

The protein belongs to the UPF0496 family.

The protein resides in the membrane. The chain is UPF0496 protein At3g57100 from Arabidopsis thaliana (Mouse-ear cress).